A 103-amino-acid chain; its full sequence is Histone H4 (103 aa).

Residues M1–G14 show a composition bias toward gly residues. Positions M1–R20 are disordered. T2 carries the post-translational modification N-acetylthreonine. Position 6 is an N6-acetyl-N6-methyllysine; alternate (K6). An N6-acetyllysine mark is found at K6, K9, K13, and K17. Residue K13 is modified to N6-acetyl-N6-methyllysine; alternate. N6,N6-dimethyllysine is present on K21. K32 is modified (N6-methyllysine).

Belongs to the histone H4 family. The nucleosome is a histone octamer containing two molecules each of H2A, H2B, H3 and H4 assembled in one H3-H4 heterotetramer and two H2A-H2B heterodimers. The octamer wraps approximately 147 bp of DNA.

It is found in the nucleus. It localises to the chromosome. In terms of biological role, core component of nucleosome. Nucleosomes wrap and compact DNA into chromatin, limiting DNA accessibility to the cellular machineries which require DNA as a template. Histones thereby play a central role in transcription regulation, DNA repair, DNA replication and chromosomal stability. DNA accessibility is regulated via a complex set of post-translational modifications of histones, also called histone code, and nucleosome remodeling. Its function is as follows. A mixture of histones H2B and H4 has antimicrobial activity against the Gram-positive bacterium M.luteus. In Penaeus vannamei (Whiteleg shrimp), this protein is Histone H4.